The following is a 299-amino-acid chain: RGG repeats nuclear RNA binding protein A (299 aa).

Residues 1 to 21 (RGGGRGGPRGGGRGRGPGRGR) show a composition bias toward gly residues. 2 disordered regions span residues 1-173 (RGGG…KEMT) and 232-299 (EAVE…LVAK). Residues 45–60 (RVQEDGESGKLSERRG) show a composition bias toward basic and acidic residues. Positions 61–78 (GYGGPRGGFHGGRRGGFN) are enriched in gly residues. 2 stretches are compositionally biased toward basic and acidic residues: residues 86–98 (EGER…DRRS) and 134–146 (DGEK…KEAG). An Arginine-rich RNA-binding motif E-R-P-R-R-X-[F/Y]-[E/D]-R-R-S motif is present at residues 88–98 (ERPRRVFDRRS). Positions 267–278 (RGRGGFGGGVGG) are enriched in gly residues.

This sequence belongs to the SERBP1-HABP4 family. In terms of tissue distribution, expressed in seedlings but not in roots.

Its subcellular location is the nucleus. The protein localises to the cytoplasm. The protein resides in the perinuclear region. In terms of biological role, ribosome-binding protein that acts as a regulator of mRNA translation by promoting ribosome inactivation. Binds RNA. This chain is RGG repeats nuclear RNA binding protein A, found in Nicotiana tabacum (Common tobacco).